The sequence spans 261 residues: Undecaprenyl-diphosphatase 2 (261 aa).

A run of 8 helical transmembrane segments spans residues 1-21, 38-58, 75-95, 103-123, 138-158, 178-198, 212-232, and 240-260; these read MLEA…PISS, PGKT…CVVF, FAFA…GATL, LESP…ILVI, MSPA…VPGV, AAEF…AYSL, LIAL…KGFI, and FAPF…LILM.

It belongs to the UppP family.

It is found in the cell inner membrane. The enzyme catalyses di-trans,octa-cis-undecaprenyl diphosphate + H2O = di-trans,octa-cis-undecaprenyl phosphate + phosphate + H(+). In terms of biological role, catalyzes the dephosphorylation of undecaprenyl diphosphate (UPP). Confers resistance to bacitracin. This Paramagnetospirillum magneticum (strain ATCC 700264 / AMB-1) (Magnetospirillum magneticum) protein is Undecaprenyl-diphosphatase 2.